The primary structure comprises 415 residues: Serine hydroxymethyltransferase 2 (415 aa).

Residues Leu122 and 126 to 128 (GHL) each bind (6S)-5,6,7,8-tetrahydrofolate. N6-(pyridoxal phosphate)lysine is present on Lys230.

The protein belongs to the SHMT family. In terms of assembly, homodimer. Pyridoxal 5'-phosphate is required as a cofactor.

The protein localises to the cytoplasm. It catalyses the reaction (6R)-5,10-methylene-5,6,7,8-tetrahydrofolate + glycine + H2O = (6S)-5,6,7,8-tetrahydrofolate + L-serine. Its pathway is one-carbon metabolism; tetrahydrofolate interconversion. The protein operates within amino-acid biosynthesis; glycine biosynthesis; glycine from L-serine: step 1/1. Catalyzes the reversible interconversion of serine and glycine with tetrahydrofolate (THF) serving as the one-carbon carrier. This reaction serves as the major source of one-carbon groups required for the biosynthesis of purines, thymidylate, methionine, and other important biomolecules. Also exhibits THF-independent aldolase activity toward beta-hydroxyamino acids, producing glycine and aldehydes, via a retro-aldol mechanism. The protein is Serine hydroxymethyltransferase 2 of Burkholderia lata (strain ATCC 17760 / DSM 23089 / LMG 22485 / NCIMB 9086 / R18194 / 383).